The chain runs to 220 residues: Protein-L-isoaspartate O-methyltransferase (220 aa).

Residue S65 is part of the active site.

It belongs to the methyltransferase superfamily. L-isoaspartyl/D-aspartyl protein methyltransferase family.

Its subcellular location is the cytoplasm. It catalyses the reaction [protein]-L-isoaspartate + S-adenosyl-L-methionine = [protein]-L-isoaspartate alpha-methyl ester + S-adenosyl-L-homocysteine. Functionally, catalyzes the methyl esterification of L-isoaspartyl residues in peptides and proteins that result from spontaneous decomposition of normal L-aspartyl and L-asparaginyl residues. It plays a role in the repair and/or degradation of damaged proteins. The protein is Protein-L-isoaspartate O-methyltransferase of Pelodictyon phaeoclathratiforme (strain DSM 5477 / BU-1).